Consider the following 333-residue polypeptide: Eukaryotic translation initiation factor 2 subunit 2 (333 aa).

Disordered regions lie at residues 1–120 and 139–165; these read MSGD…LDIM and ILEK…QTGP. S2 is subject to N-acetylserine. S2 is subject to Phosphoserine. S13 carries the post-translational modification Phosphoserine; by PKC; in vitro. Residues 13-22 are compositionally biased toward basic residues; sequence SKKKKKKKKP. T36 carries the post-translational modification Phosphothreonine. A compositionally biased stretch (basic and acidic residues) spans 40–51; it reads ETKEVEPEPTED. S67 is subject to Phosphoserine; by CK2. The span at 96–105 shows a compositional bias: basic and acidic residues; that stretch reads EGVKDLKIEN. A Glycyl lysine isopeptide (Lys-Gly) (interchain with G-Cter in SUMO2) cross-link involves residue K102. Acidic residues-rich tracts occupy residues 106-118 and 139-149; these read DVQE…DDLD and ILEKDEALEDE. S158 bears the Phosphoserine mark. Residue S218 is modified to Phosphoserine; by PKA; in vitro. Residues K265 and K293 each carry the N6-acetyllysine modification. The C4-type zinc finger occupies 281–305; it reads CHTCRSPDTILQKDTRLYFLQCETC.

This sequence belongs to the eIF-2-beta/eIF-5 family. Eukaryotic translation initiation factor 2 eIF2 is a heterotrimeric complex composed of an alpha (EIF2S1), a beta (EIF2S2) and a gamma (EIF2S3) chain. eIF2 is member of the 43S pre-initiation complex (43S PIC). eIF2 forms a complex with at least CELF1/CUGBP1, CALR, CALR3, EIF2S1, EIF2S2, HSP90B1 and HSPA5. Interacts with BZW2/5MP1. Interacts with EIF5. Post-translationally, the N-terminus is blocked.

The protein resides in the cytoplasm. It localises to the cytosol. Component of the eIF2 complex that functions in the early steps of protein synthesis by forming a ternary complex with GTP and initiator tRNA. This complex binds to a 40S ribosomal subunit, followed by mRNA binding to form the 43S pre-initiation complex (43S PIC). Junction of the 60S ribosomal subunit to form the 80S initiation complex is preceded by hydrolysis of the GTP bound to eIF2 and release of an eIF2-GDP binary complex. In order for eIF2 to recycle and catalyze another round of initiation, the GDP bound to eIF2 must exchange with GTP by way of a reaction catalyzed by eIF2B. This is Eukaryotic translation initiation factor 2 subunit 2 (EIF2S2) from Oryctolagus cuniculus (Rabbit).